The chain runs to 99 residues: MMNMQNMMRQAQKLQKQMEKSQAELAATQFTGSSVQDLVTATFTGDKKLVSIDFKADVVDADDLETLQEMTIQAVNAALTKVDEATQKKLGAFAGKLPF.

It belongs to the YbaB/EbfC family. In terms of assembly, homodimer.

The protein resides in the cytoplasm. It localises to the nucleoid. In terms of biological role, binds to DNA and alters its conformation. May be involved in regulation of gene expression, nucleoid organization and DNA protection. This Streptococcus suis (strain 98HAH33) protein is Nucleoid-associated protein SSU98_0195.